We begin with the raw amino-acid sequence, 844 residues long: 3',5'-cyclic-AMP phosphodiesterase 4A (844 aa).

Residues 1 to 124 form a disordered region; it reads MEPPAAPSER…RSPLDSQASP (124 aa). Residue serine 13 is modified to Phosphoserine. The segment covering 36-46 has biased composition (low complexity); sequence QPRTPIRIQQR. Positions 51–78 are enriched in basic and acidic residues; the sequence is SAERSEPERSPHRPIERADAVDTGDRPG. A compositionally biased stretch (polar residues) spans 82–91; the sequence is TRMSWPSSFH. Phosphoserine occurs at positions 147, 152, 160, 204, and 333. The PDEase domain occupies 343–672; the sequence is VKTDQEDLLA…DWYHSAIRQS (330 aa). A Glycyl lysine isopeptide (Lys-Gly) (interchain with G-Cter in SUMO) cross-link involves residue lysine 344. Catalysis depends on histidine 419, which acts as the Proton donor. Residue histidine 419 participates in 3',5'-cyclic AMP binding. The AMP site is built by histidine 419 and histidine 423. Residues histidine 423, histidine 459, aspartate 460, and aspartate 577 each contribute to the Zn(2+) site. AMP contacts are provided by aspartate 460, aspartate 577, glutamine 628, and phenylalanine 631. Aspartate 460 serves as a coordination point for Mg(2+). Mn(2+) is bound at residue aspartate 460. The 3',5'-cyclic AMP site is built by glutamine 628 and phenylalanine 631. Serine 672 and serine 674 each carry phosphoserine. The interval 819 to 844 is disordered; sequence ACSGTSGDNSAVISAPGRWGSGGDPA. The segment covering 820-830 has biased composition (polar residues); it reads CSGTSGDNSAV.

The protein belongs to the cyclic nucleotide phosphodiesterase family. PDE4 subfamily. As to quaternary structure, interacts with LYN (via SH3 domain). Interacts with ARRB2. Zn(2+) is required as a cofactor. It depends on Mg(2+) as a cofactor. The cofactor is Mn(2+). Post-translationally, proteolytically cleaved by CASP3.

Its subcellular location is the cytoplasm. It localises to the cytosol. It is found in the membrane. The catalysed reaction is 3',5'-cyclic AMP + H2O = AMP + H(+). It participates in purine metabolism; 3',5'-cyclic AMP degradation; AMP from 3',5'-cyclic AMP: step 1/1. Inhibited by rolipram and diazepam. Its function is as follows. Hydrolyzes the second messenger 3',5'-cyclic AMP (cAMP), which is a key regulator of many important physiological processes. Efficiently hydrolyzes cAMP. This Mus musculus (Mouse) protein is 3',5'-cyclic-AMP phosphodiesterase 4A (Pde4a).